We begin with the raw amino-acid sequence, 547 residues long: Solute carrier family 22 member 25 (547 aa).

Topologically, residues 1 to 9 (MAFQDLLDQ) are cytoplasmic. Residues 10 to 30 (VGGLGRFQILQMVFLIMFNVI) traverse the membrane as a helical segment. The Extracellular segment spans residues 31-145 (VYHQTQLENF…DLVCESQPLN (115 aa)). 2 N-linked (GlcNAc...) asparagine glycosylation sites follow: N56 and N102. The helical transmembrane segment at 146 to 166 (SVAKFLFMAGMMVGGNLYGHL) threads the bilayer. At 167 to 177 (SDRFGRKFVLR) the chain is on the cytoplasmic side. A helical membrane pass occupies residues 178-198 (WSYLQLAIVGTCAAFAPTILV). Residues 199–204 (YCSLRF) are Extracellular-facing. The helical transmembrane segment at 205–225 (LAGAATFSIIVNTVLLIVEWI) threads the bilayer. The Cytoplasmic portion of the chain corresponds to 226-234 (THQFCAMAL). A helical transmembrane segment spans residues 235–255 (TLTLCAASIGHITLGSLAFVI). The Extracellular segment spans residues 256–259 (RDQC). Residues 260 to 280 (ILQLVMSAPCFVFFLFSRWLA) traverse the membrane as a helical segment. The Cytoplasmic portion of the chain corresponds to 281 to 349 (ESARWLIINN…LLRIPNICKR (69 aa)). A helical membrane pass occupies residues 350–370 (ICFLSFVRFASTIPFWGLTLH). The Extracellular portion of the chain corresponds to 371-377 (LQHLGNN). A helical transmembrane segment spans residues 378 to 398 (VFLLQTLFGAVTLLANCVAPW). The Cytoplasmic segment spans residues 399 to 406 (ALNHMSRR). The chain crosses the membrane as a helical span at residues 407-427 (LSQMLLMFLLATCLLAIIFVP). At 428 to 434 (QEMQTLR) the chain is on the extracellular side. The chain crosses the membrane as a helical span at residues 435–455 (VVLATLGVGAASLGITCSTAQ). The Cytoplasmic portion of the chain corresponds to 456–470 (ENELIPSIIRGRATG). A helical transmembrane segment spans residues 471–491 (ITGNFANIGGALASLMMILSI). The Extracellular segment spans residues 492–494 (YSR). The helical transmembrane segment at 495-515 (PLPWIIYGVFAILSGLVVLLL) threads the bilayer. Residues 516–547 (PETRNQPLLDSIQDVENEGVNSLAAPQRSSVL) are Cytoplasmic-facing.

The protein belongs to the major facilitator (TC 2.A.1) superfamily. Organic cation transporter (TC 2.A.1.19) family. Expressed exclusively in liver in both embryo and adult.

Its subcellular location is the membrane. This is Solute carrier family 22 member 25 from Homo sapiens (Human).